The following is a 512-amino-acid chain: Methionine--tRNA ligase (512 aa).

The short motif at Y11 to H21 is the 'HIGH' region element. Positions 126, 129, 143, and 147 each coordinate Zn(2+). A 'KMSKS' region motif is present at residues K301 to S305. Position 304 (K304) interacts with ATP.

Belongs to the class-I aminoacyl-tRNA synthetase family. MetG type 2A subfamily. In terms of assembly, monomer. Requires Zn(2+) as cofactor.

The protein localises to the cytoplasm. The catalysed reaction is tRNA(Met) + L-methionine + ATP = L-methionyl-tRNA(Met) + AMP + diphosphate. Its function is as follows. Is required not only for elongation of protein synthesis but also for the initiation of all mRNA translation through initiator tRNA(fMet) aminoacylation. In Mycoplasma genitalium (strain ATCC 33530 / DSM 19775 / NCTC 10195 / G37) (Mycoplasmoides genitalium), this protein is Methionine--tRNA ligase (metG).